The chain runs to 475 residues: Ribulose bisphosphate carboxylase large chain (475 aa).

The propeptide occupies 1-2; it reads MS. Pro-3 is modified (N-acetylproline). Residue Lys-14 is modified to N6,N6,N6-trimethyllysine. 2 residues coordinate substrate: Asn-123 and Thr-173. The active-site Proton acceptor is Lys-175. Lys-177 serves as a coordination point for substrate. Positions 201, 203, and 204 each coordinate Mg(2+). Lys-201 is modified (N6-carboxylysine). His-294 serves as the catalytic Proton acceptor. Substrate contacts are provided by Arg-295, His-327, and Ser-379.

It belongs to the RuBisCO large chain family. Type I subfamily. As to quaternary structure, heterohexadecamer of 8 large chains and 8 small chains; disulfide-linked. The disulfide link is formed within the large subunit homodimers. Mg(2+) is required as a cofactor. Post-translationally, the disulfide bond which can form in the large chain dimeric partners within the hexadecamer appears to be associated with oxidative stress and protein turnover.

Its subcellular location is the plastid. The protein resides in the chloroplast. It carries out the reaction 2 (2R)-3-phosphoglycerate + 2 H(+) = D-ribulose 1,5-bisphosphate + CO2 + H2O. The enzyme catalyses D-ribulose 1,5-bisphosphate + O2 = 2-phosphoglycolate + (2R)-3-phosphoglycerate + 2 H(+). Functionally, ruBisCO catalyzes two reactions: the carboxylation of D-ribulose 1,5-bisphosphate, the primary event in carbon dioxide fixation, as well as the oxidative fragmentation of the pentose substrate in the photorespiration process. Both reactions occur simultaneously and in competition at the same active site. In Corylus cornuta (Beaked hazel), this protein is Ribulose bisphosphate carboxylase large chain.